The primary structure comprises 566 residues: Oxygen-dependent choline dehydrogenase (566 aa).

7–36 (DYIICGAGSAGNVLATRLTEDPNVTVLLLE) lines the FAD pocket. Residues 183–203 (QQEGFGPMDRTVTPKGRRAST) form a disordered region. H474 (proton acceptor) is an active-site residue.

The protein belongs to the GMC oxidoreductase family. It depends on FAD as a cofactor.

The catalysed reaction is choline + A = betaine aldehyde + AH2. It catalyses the reaction betaine aldehyde + NAD(+) + H2O = glycine betaine + NADH + 2 H(+). The protein operates within amine and polyamine biosynthesis; betaine biosynthesis via choline pathway; betaine aldehyde from choline (cytochrome c reductase route): step 1/1. Functionally, involved in the biosynthesis of the osmoprotectant glycine betaine. Catalyzes the oxidation of choline to betaine aldehyde and betaine aldehyde to glycine betaine at the same rate. The chain is Oxygen-dependent choline dehydrogenase from Burkholderia ambifaria (strain ATCC BAA-244 / DSM 16087 / CCUG 44356 / LMG 19182 / AMMD) (Burkholderia cepacia (strain AMMD)).